A 432-amino-acid chain; its full sequence is MARSIVVLGAQWGDEGKGKIVDWLTSRAQYVVRYQGGHNAGHTIVVDQQKITLHLIPSGILHNHVTAVIANGVVLSPFSLIKEMKMLLKLGVSTCKRIFISASCPLLLPYHVAMDLARENHHISKAIGTTGCGIGPSYEDKVARRALRVSDLYNLKYFKNKLKDVVDYYNFQLVYYYKTKPINYQIVLEEVMSISDILIDMVVDVPELLDDAAKRGDSVIFEGAQGSLLDIDHGTYPYVTSSHTIAGSVSVGAGVGLNYIDYVLGIVKAYSTRVGFGPFPTELSNDTGNWLCMNGNEFGSTTGRRRRTGWFDAVSVRYSVKINSFFSCCLTKIDVLDGLKELKICIAYRKKNGKVIHNFPCSLEELENCVPIYEILPGWMISTVGITEFHQLPKESQLYVKRIEELIGVPIHIVSTGSDRSAIIILRNPFDS.

Residues 13–19 and 41–43 contribute to the GTP site; these read GDEGKGK and GHT. The Proton acceptor role is filled by Asp-14. 2 residues coordinate Mg(2+): Asp-14 and Gly-41. IMP is bound by residues 14–17, 39–42, Thr-130, Arg-144, Gln-225, Thr-240, and Arg-304; these read DEGK and NAGH. His-42 (proton donor) is an active-site residue. A substrate-binding site is contributed by 300–306; it reads STTGRRR. Residues Arg-306, 332–334, and 415–417 contribute to the GTP site; these read KID and STG.

Belongs to the adenylosuccinate synthetase family. As to quaternary structure, homodimer. Mg(2+) serves as cofactor.

The protein localises to the cytoplasm. It catalyses the reaction IMP + L-aspartate + GTP = N(6)-(1,2-dicarboxyethyl)-AMP + GDP + phosphate + 2 H(+). Its pathway is purine metabolism; AMP biosynthesis via de novo pathway; AMP from IMP: step 1/2. Functionally, plays an important role in the de novo pathway of purine nucleotide biosynthesis. Catalyzes the first committed step in the biosynthesis of AMP from IMP. The chain is Adenylosuccinate synthetase from Blochmanniella pennsylvanica (strain BPEN).